We begin with the raw amino-acid sequence, 443 residues long: Tubulin epsilon and delta complex protein 2 (443 aa).

Residues 8–33 are a coiled coil; sequence RRLVAELRDALDSCAERQRQLEQSLR. Disordered regions lie at residues 45-72 and 93-146; these read AETP…PSPQ and GLSK…PWVP. Residues 106–124 are compositionally biased toward low complexity; that stretch reads LKSGSASTATKASAPPSTS.

As to quaternary structure, interacts with TEDC1. Found in a complex with TEDC1, TEDC2, TUBE1 and TUBD1.

The protein resides in the cell projection. Its subcellular location is the cilium. It localises to the cytoplasm. The protein localises to the cytoskeleton. It is found in the microtubule organizing center. The protein resides in the centrosome. Its subcellular location is the centriole. Acts as a positive regulator of ciliary hedgehog signaling. Required for centriole stability. The sequence is that of Tubulin epsilon and delta complex protein 2 from Bos taurus (Bovine).